The primary structure comprises 480 residues: Alkaline nuclease (480 aa).

It belongs to the herpesviridae alkaline nuclease family. As to quaternary structure, interacts with major DNA-binding protein; this interaction increases the nuclease processivity of the alkaline exonuclease.

The protein localises to the host nucleus. Its subcellular location is the host cytoplasm. In terms of biological role, plays a role in processing non linear or branched viral DNA intermediates in order to promote the production of mature packaged unit-length linear progeny viral DNA molecules. Exhibits endonuclease and exonuclease activities and accepts both double-stranded and single-stranded DNA as substrate. Exonuclease digestion of DNA is in the 5'-&gt; 3' direction and the products are 5'-monophosphate nucleosides. Additionally, forms a recombinase with the major DNA-binding protein, which displays strand exchange activity. The chain is Alkaline nuclease (U70) from Homo sapiens (Human).